The chain runs to 105 residues: Heat shock protein HspQ (105 aa).

Residues 80 to 105 (AHPEQPSLDELAASIRHQLQAPHLRN) form a disordered region.

The protein belongs to the HspQ family.

It localises to the cytoplasm. Involved in the degradation of certain denaturated proteins, including DnaA, during heat shock stress. This is Heat shock protein HspQ from Yersinia pseudotuberculosis serotype O:1b (strain IP 31758).